A 635-amino-acid chain; its full sequence is Threonine--tRNA ligase (635 aa).

A TGS domain is found at 1-61 (MIKITLKDGK…HKDSSLEILT (61 aa)). Residues 242–532 (DHRKLGKELD…LIEQYAGAFP (291 aa)) are catalytic. Cys-333, His-384, and His-509 together coordinate Zn(2+).

The protein belongs to the class-II aminoacyl-tRNA synthetase family. As to quaternary structure, homodimer. Zn(2+) is required as a cofactor.

It localises to the cytoplasm. It catalyses the reaction tRNA(Thr) + L-threonine + ATP = L-threonyl-tRNA(Thr) + AMP + diphosphate + H(+). In terms of biological role, catalyzes the attachment of threonine to tRNA(Thr) in a two-step reaction: L-threonine is first activated by ATP to form Thr-AMP and then transferred to the acceptor end of tRNA(Thr). Also edits incorrectly charged L-seryl-tRNA(Thr). The protein is Threonine--tRNA ligase of Clostridium botulinum (strain Loch Maree / Type A3).